Consider the following 284-residue polypeptide: Tropomyosin Per a 7.0102 (284 aa).

Residues 1–266 (MDAIKKKMQA…EDELVHEKEK (266 aa)) adopt a coiled-coil conformation.

This sequence belongs to the tropomyosin family. In terms of assembly, homodimer. Expressed in striated skeletal muscle (at protein level).

Functionally, tropomyosin, in association with the troponin complex, plays a central role in the calcium dependent regulation of muscle contraction. This Periplaneta americana (American cockroach) protein is Tropomyosin Per a 7.0102.